Here is a 111-residue protein sequence, read N- to C-terminus: Aspartate 1-decarboxylase (111 aa).

Ser-25 (schiff-base intermediate with substrate; via pyruvic acid) is an active-site residue. Ser-25 is subject to Pyruvic acid (Ser). Thr-57 is a substrate binding site. Catalysis depends on Tyr-58, which acts as the Proton donor. 73-75 (GPA) is a substrate binding site.

This sequence belongs to the PanD family. In terms of assembly, heterooctamer of four alpha and four beta subunits. The cofactor is pyruvate. Is synthesized initially as an inactive proenzyme, which is activated by self-cleavage at a specific serine bond to produce a beta-subunit with a hydroxyl group at its C-terminus and an alpha-subunit with a pyruvoyl group at its N-terminus.

It is found in the cytoplasm. It carries out the reaction L-aspartate + H(+) = beta-alanine + CO2. Its pathway is cofactor biosynthesis; (R)-pantothenate biosynthesis; beta-alanine from L-aspartate: step 1/1. Functionally, catalyzes the pyruvoyl-dependent decarboxylation of aspartate to produce beta-alanine. This Francisella tularensis subsp. tularensis (strain FSC 198) protein is Aspartate 1-decarboxylase.